The sequence spans 349 residues: MDNHEEKRQRRVRYNGTHPKVFKEKYKELQPDKYADAVAKVIQKGSTPAGMHRSICVNEILEFLKITPGQTGLDATLGYGGHTLEMLKRLNSKGHLYAIDVDSIELPRTQERLEGLGYGSEILTIKQMNFSNIDQIALESGPLNFVLADLGVSSMQIDNPERGFSFKSEGPLDLRLNPNRGISAAARLKTISQDELQGMLLENADEPNSAAISRAIISEIKKGIDISTTTQLQQIIKDALKFIPQNTRKDEIKKSCQRCFQALRIDVNDEFEMLYEFLEKLPATLAEGGRVAILSFHSGEDRLVKKSFQRFFREGVYREIAPNFIRPSTEECNTNGRARSAKLRWAIKA.

S-adenosyl-L-methionine contacts are provided by residues Gly80–His82, Asp100, Phe130, Asp149, and Gln156.

This sequence belongs to the methyltransferase superfamily. RsmH family.

The protein localises to the cytoplasm. It catalyses the reaction cytidine(1402) in 16S rRNA + S-adenosyl-L-methionine = N(4)-methylcytidine(1402) in 16S rRNA + S-adenosyl-L-homocysteine + H(+). In terms of biological role, specifically methylates the N4 position of cytidine in position 1402 (C1402) of 16S rRNA. The sequence is that of Ribosomal RNA small subunit methyltransferase H 2 from Alkaliphilus metalliredigens (strain QYMF).